Reading from the N-terminus, the 522-residue chain is Protein nucleotidyltransferase YdiU (522 aa).

The ATP site is built by Gly109, Gly111, Arg112, Lys132, Asp144, Gly145, Arg195, and Arg202. The active-site Proton acceptor is Asp271. Asn272 and Asp281 together coordinate Mg(2+). Asp281 provides a ligand contact to ATP.

Belongs to the SELO family. Mg(2+) is required as a cofactor. It depends on Mn(2+) as a cofactor.

The catalysed reaction is L-seryl-[protein] + ATP = 3-O-(5'-adenylyl)-L-seryl-[protein] + diphosphate. It catalyses the reaction L-threonyl-[protein] + ATP = 3-O-(5'-adenylyl)-L-threonyl-[protein] + diphosphate. It carries out the reaction L-tyrosyl-[protein] + ATP = O-(5'-adenylyl)-L-tyrosyl-[protein] + diphosphate. The enzyme catalyses L-histidyl-[protein] + UTP = N(tele)-(5'-uridylyl)-L-histidyl-[protein] + diphosphate. The catalysed reaction is L-seryl-[protein] + UTP = O-(5'-uridylyl)-L-seryl-[protein] + diphosphate. It catalyses the reaction L-tyrosyl-[protein] + UTP = O-(5'-uridylyl)-L-tyrosyl-[protein] + diphosphate. Functionally, nucleotidyltransferase involved in the post-translational modification of proteins. It can catalyze the addition of adenosine monophosphate (AMP) or uridine monophosphate (UMP) to a protein, resulting in modifications known as AMPylation and UMPylation. This is Protein nucleotidyltransferase YdiU from Burkholderia orbicola (strain MC0-3).